The sequence spans 206 residues: Probable glutathione S-transferase 8 (206 aa).

The GST N-terminal domain occupies 2-79 (VHYKLSYFPI…FLARQFGING (78 aa)). Residues Tyr-8, Trp-39, Lys-43, 49–51 (GQL), and 63–64 (QS) each bind glutathione. The GST C-terminal domain maps to 81 to 206 (CAWEEAQVNS…WLETRPETQF (126 aa)).

This sequence belongs to the GST superfamily. Sigma family.

It carries out the reaction RX + glutathione = an S-substituted glutathione + a halide anion + H(+). Conjugation of reduced glutathione to a wide number of exogenous and endogenous hydrophobic electrophiles. This chain is Probable glutathione S-transferase 8 (gst-8), found in Caenorhabditis elegans.